The following is a 127-amino-acid chain: Putative iron-sulfur cluster insertion protein ErpA (127 aa).

Polar residues predominate over residues 1–14 (MNTPFNDGSGQTDP). The segment at 1–20 (MNTPFNDGSGQTDPMTDIPT) is disordered. 3 residues coordinate iron-sulfur cluster: Cys-55, Cys-119, and Cys-121.

This sequence belongs to the HesB/IscA family. In terms of assembly, homodimer. It depends on iron-sulfur cluster as a cofactor.

Its function is as follows. Required for insertion of 4Fe-4S clusters. This Nitrosospira multiformis (strain ATCC 25196 / NCIMB 11849 / C 71) protein is Putative iron-sulfur cluster insertion protein ErpA.